The chain runs to 429 residues: MSAIVDVIAREILDSRGNPTVEADVLLESGVMGRAAVPSGASTGSREAIELRDGDAARFLGKGVLRAVENVNTEISEAIIGLDAEEQAFIDRTLIDLDGTENKSRLGANATLAVSMAVARAAAEEAGLPLYRYFGGSGPMAMPVPMMNVINGGEHANNSLDIQECMIMPVSMGSFREALRCGAEIFHHLKKITDKKGYPTTVGDEGGFAPNVSGTEEALNLIQEAIAAAGYEPGRDVLLALDCAASEFYKDGKYELKGEGLSLTSEGFTDYLATLADKFPIVSIEDGMAEGDWAGWKHLTDRLGRKIQLVGDDLFVTNTKILEQGIDQGVANSILIKINQIGTLSETFAAVEMAKRAGYTAVISHRSGETEDSTIADIAVGLNAMQIKTGSLSRSDRIAKYNQLLRIEEDLGNTVVYPGKRAFYNLRSR.

Residue Gln163 participates in (2R)-2-phosphoglycerate binding. Residue Glu205 is the Proton donor of the active site. Residues Asp242, Glu285, and Asp312 each contribute to the Mg(2+) site. Positions 337, 366, 367, and 388 each coordinate (2R)-2-phosphoglycerate. Lys337 serves as the catalytic Proton acceptor.

It belongs to the enolase family. Mg(2+) serves as cofactor.

The protein resides in the cytoplasm. It is found in the secreted. The protein localises to the cell surface. It carries out the reaction (2R)-2-phosphoglycerate = phosphoenolpyruvate + H2O. Its pathway is carbohydrate degradation; glycolysis; pyruvate from D-glyceraldehyde 3-phosphate: step 4/5. Its function is as follows. Catalyzes the reversible conversion of 2-phosphoglycerate (2-PG) into phosphoenolpyruvate (PEP). It is essential for the degradation of carbohydrates via glycolysis. The sequence is that of Enolase from Azoarcus sp. (strain BH72).